Consider the following 189-residue polypeptide: Transcription factor FapR (189 aa).

Belongs to the FapR family.

In terms of biological role, transcriptional factor involved in regulation of membrane lipid biosynthesis by repressing genes involved in fatty acid and phospholipid metabolism. The sequence is that of Transcription factor FapR from Exiguobacterium sp. (strain ATCC BAA-1283 / AT1b).